The primary structure comprises 379 residues: Protein hairy (379 aa).

The segment at 20-50 (STQQQQQQQQHKEAPIKSDRRSNKPIMEKRR) is disordered. The segment covering 29 to 47 (QHKEAPIKSDRRSNKPIME) has biased composition (basic and acidic residues). Residues 36–55 (KSDRRSNKPIMEKRRRARIN) form an interaction with Topors region. The region spanning 38–95 (DRRSNKPIMEKRRRARINNCLNELKTLILDATKKDPARHSKLEKADILEKTVKHLQEL) is the bHLH domain. The Orange domain occupies 114-143 (FKAGFADCANEVSRFPGLDSTQRRRLLQHL). Disordered stretches follow at residues 167-208 (QSLH…NTTA) and 298-345 (QRTA…VKPS). Composition is skewed to low complexity over residues 182-207 (PEQE…TNTT) and 301-328 (ASTG…GSYA). The short motif at 376-379 (WRPW) is the WRPW motif element.

As to quaternary structure, transcription repression requires formation of a complex with a corepressor protein (Groucho).

The protein resides in the nucleus. Pair-rule protein that regulates embryonic segmentation and adult bristle patterning. Transcriptional repressor of genes that require a bHLH protein for their transcription (e.g. ftz). This chain is Protein hairy, found in Drosophila virilis (Fruit fly).